A 130-amino-acid polypeptide reads, in one-letter code: Protein YoeA (130 aa).

A signal peptide spans 1–28 (MLYNIPCRIYILSTLSLCISGIVSTATA). Positions 51 to 130 (NLWESPATIQ…RCRRYSRGER (80 aa)) constitute a TBDR plug domain.

Belongs to the TonB-dependent receptor family.

This Escherichia coli (strain K12) protein is Protein YoeA (yoeA).